We begin with the raw amino-acid sequence, 182 residues long: Small ribosomal subunit protein uS5 (182 aa).

The region spanning 16-79 is the S5 DRBM domain; the sequence is FVDRLVHINR…ESAKRGMIYV (64 aa).

The protein belongs to the universal ribosomal protein uS5 family. As to quaternary structure, part of the 30S ribosomal subunit. Contacts proteins S4 and S8.

In terms of biological role, with S4 and S12 plays an important role in translational accuracy. Functionally, located at the back of the 30S subunit body where it stabilizes the conformation of the head with respect to the body. The sequence is that of Small ribosomal subunit protein uS5 from Bartonella tribocorum (strain CIP 105476 / IBS 506).